Here is a 682-residue protein sequence, read N- to C-terminus: Iron-phytosiderophore transporter yellow stripe 1 (682 aa).

The tract at residues 1 to 36 (MDLARRGGAAGADDEGEIERHEPAPEDMESDPAAAR) is disordered. 15 helical membrane passes run 56 to 76 (GVVA…KIAL), 79 to 99 (GLVP…LRGW), 124 to 144 (CAVA…LLGL), 167 to 187 (GFGW…LSLI), 236 to 256 (LSFV…CGFV), 288 to 308 (LVNI…WPLI), 334 to 354 (FLCI…VFGV), 396 to 416 (FPAW…AVII), 428 to 448 (VIVA…GTGL), 460 to 480 (IALF…AGLA), 514 to 534 (VAQF…FLLF), 549 to 569 (APYG…FSVL), 574 to 594 (LALS…RDVL), 612 to 632 (FLVG…VFVW), and 640 to 660 (AVFM…IWTF).

This sequence belongs to the YSL (TC 2.A.67.2) family. In terms of tissue distribution, expressed in roots of young maize seedlings. Not detected in leaves of iron-sufficient plants, but accumulates in roots and leaves of iron-deficient plants.

Its subcellular location is the membrane. In terms of biological role, involved in Fe(3+) uptake. Acts as a proton-coupled symporter for phytosiderophore- and nicotianamine-chelated metals. Capable of transporting either Fe(2+)-nicotianamine or Fe(3+)-phytosiderophore. May transport iron, zinc, nickel, copper and, at a lower rate, manganese and cadmium. This chain is Iron-phytosiderophore transporter yellow stripe 1 (YS1), found in Zea mays (Maize).